The following is a 290-amino-acid chain: Ribosomal protein L11 methyltransferase (290 aa).

Residues threonine 135, glycine 158, aspartate 180, and asparagine 227 each contribute to the S-adenosyl-L-methionine site.

The protein belongs to the methyltransferase superfamily. PrmA family.

It is found in the cytoplasm. It carries out the reaction L-lysyl-[protein] + 3 S-adenosyl-L-methionine = N(6),N(6),N(6)-trimethyl-L-lysyl-[protein] + 3 S-adenosyl-L-homocysteine + 3 H(+). Functionally, methylates ribosomal protein L11. In Mesorhizobium japonicum (strain LMG 29417 / CECT 9101 / MAFF 303099) (Mesorhizobium loti (strain MAFF 303099)), this protein is Ribosomal protein L11 methyltransferase.